The following is a 521-amino-acid chain: GMP synthase [glutamine-hydrolyzing] (521 aa).

The 195-residue stretch at 9–203 (KILILDFGSQ…VSDICQCKKN (195 aa)) folds into the Glutamine amidotransferase type-1 domain. Catalysis depends on cysteine 86, which acts as the Nucleophile. Active-site residues include histidine 177 and glutamate 179. Residues 204–396 (WTTDNIITKL…LGLPTHMLNC (193 aa)) form the GMPS ATP-PPase domain. 231–237 (SGGVDSS) contributes to the ATP binding site.

In terms of assembly, homodimer.

The enzyme catalyses XMP + L-glutamine + ATP + H2O = GMP + L-glutamate + AMP + diphosphate + 2 H(+). Its pathway is purine metabolism; GMP biosynthesis; GMP from XMP (L-Gln route): step 1/1. Its function is as follows. Catalyzes the synthesis of GMP from XMP. The protein is GMP synthase [glutamine-hydrolyzing] of Vesicomyosocius okutanii subsp. Calyptogena okutanii (strain HA).